Reading from the N-terminus, the 42-residue chain is Large ribosomal subunit protein bL36 (42 aa).

It belongs to the bacterial ribosomal protein bL36 family.

The polypeptide is Large ribosomal subunit protein bL36 (Anaplasma marginale (strain St. Maries)).